Reading from the N-terminus, the 216-residue chain is Holliday junction branch migration complex subunit RuvA (216 aa).

Positions 1-64 (MISFIKGVLI…EDAQQLYGFK (64 aa)) are domain I. The interval 65 to 143 (SKVDKKVFQE…KMANEIYAQT (79 aa)) is domain II. The tract at residues 144–163 (SGTTTTSQDSQAQQAPTSVV) is flexible linker. Positions 164–216 (LANSIFNESVDALLALGYKQKDAEKMARSAMGDATTAAEVIRKALQGSIKSKR) are domain III.

The protein belongs to the RuvA family. As to quaternary structure, homotetramer. Forms an RuvA(8)-RuvB(12)-Holliday junction (HJ) complex. HJ DNA is sandwiched between 2 RuvA tetramers; dsDNA enters through RuvA and exits via RuvB. An RuvB hexamer assembles on each DNA strand where it exits the tetramer. Each RuvB hexamer is contacted by two RuvA subunits (via domain III) on 2 adjacent RuvB subunits; this complex drives branch migration. In the full resolvosome a probable DNA-RuvA(4)-RuvB(12)-RuvC(2) complex forms which resolves the HJ.

The protein resides in the cytoplasm. Its function is as follows. The RuvA-RuvB-RuvC complex processes Holliday junction (HJ) DNA during genetic recombination and DNA repair, while the RuvA-RuvB complex plays an important role in the rescue of blocked DNA replication forks via replication fork reversal (RFR). RuvA specifically binds to HJ cruciform DNA, conferring on it an open structure. The RuvB hexamer acts as an ATP-dependent pump, pulling dsDNA into and through the RuvAB complex. HJ branch migration allows RuvC to scan DNA until it finds its consensus sequence, where it cleaves and resolves the cruciform DNA. This Francisella tularensis subsp. tularensis (strain WY96-3418) protein is Holliday junction branch migration complex subunit RuvA.